A 407-amino-acid chain; its full sequence is Nicotinate phosphoribosyltransferase (407 aa).

His-224 is subject to Phosphohistidine; by autocatalysis.

This sequence belongs to the NAPRTase family. Transiently phosphorylated on a His residue during the reaction cycle. Phosphorylation strongly increases the affinity for substrates and increases the rate of nicotinate D-ribonucleotide production. Dephosphorylation regenerates the low-affinity form of the enzyme, leading to product release.

It catalyses the reaction nicotinate + 5-phospho-alpha-D-ribose 1-diphosphate + ATP + H2O = nicotinate beta-D-ribonucleotide + ADP + phosphate + diphosphate. The protein operates within cofactor biosynthesis; NAD(+) biosynthesis; nicotinate D-ribonucleotide from nicotinate: step 1/1. Catalyzes the synthesis of beta-nicotinate D-ribonucleotide from nicotinate and 5-phospho-D-ribose 1-phosphate at the expense of ATP. In Pseudomonas savastanoi pv. phaseolicola (strain 1448A / Race 6) (Pseudomonas syringae pv. phaseolicola (strain 1448A / Race 6)), this protein is Nicotinate phosphoribosyltransferase.